A 95-amino-acid chain; its full sequence is Large ribosomal subunit protein bL25 (95 aa).

The protein belongs to the bacterial ribosomal protein bL25 family. Part of the 50S ribosomal subunit; part of the 5S rRNA/L5/L18/L25 subcomplex. Contacts the 5S rRNA. Binds to the 5S rRNA independently of L5 and L18.

This is one of the proteins that binds to the 5S RNA in the ribosome where it forms part of the central protuberance. The chain is Large ribosomal subunit protein bL25 from Shewanella loihica (strain ATCC BAA-1088 / PV-4).